A 339-amino-acid chain; its full sequence is Glyceraldehyde-3-phosphate dehydrogenase (339 aa).

NAD(+) contacts are provided by residues 12-13 (RI), aspartate 39, arginine 84, and serine 127. D-glyceraldehyde 3-phosphate-binding positions include 157–159 (SCT), threonine 188, arginine 203, 216–217 (TG), and arginine 239. The active-site Nucleophile is the cysteine 158. An NAD(+)-binding site is contributed by asparagine 320.

It belongs to the glyceraldehyde-3-phosphate dehydrogenase family. Homotetramer.

Its subcellular location is the cytoplasm. It catalyses the reaction D-glyceraldehyde 3-phosphate + phosphate + NAD(+) = (2R)-3-phospho-glyceroyl phosphate + NADH + H(+). Its pathway is carbohydrate degradation; glycolysis; pyruvate from D-glyceraldehyde 3-phosphate: step 1/5. In terms of biological role, catalyzes the oxidative phosphorylation of glyceraldehyde 3-phosphate (G3P) to 1,3-bisphosphoglycerate (BPG) using the cofactor NAD. The first reaction step involves the formation of a hemiacetal intermediate between G3P and a cysteine residue, and this hemiacetal intermediate is then oxidized to a thioester, with concomitant reduction of NAD to NADH. The reduced NADH is then exchanged with the second NAD, and the thioester is attacked by a nucleophilic inorganic phosphate to produce BPG. This is Glyceraldehyde-3-phosphate dehydrogenase (gap) from Mycobacterium bovis (strain ATCC BAA-935 / AF2122/97).